The primary structure comprises 363 residues: Histidinol-phosphate aminotransferase (363 aa).

An N6-(pyridoxal phosphate)lysine modification is found at Lys-220.

Belongs to the class-II pyridoxal-phosphate-dependent aminotransferase family. Histidinol-phosphate aminotransferase subfamily. Homodimer. Requires pyridoxal 5'-phosphate as cofactor.

The catalysed reaction is L-histidinol phosphate + 2-oxoglutarate = 3-(imidazol-4-yl)-2-oxopropyl phosphate + L-glutamate. It participates in amino-acid biosynthesis; L-histidine biosynthesis; L-histidine from 5-phospho-alpha-D-ribose 1-diphosphate: step 7/9. This chain is Histidinol-phosphate aminotransferase, found in Chlorobium chlorochromatii (strain CaD3).